The following is a 96-amino-acid chain: MNTIVKHTVGFIASIVLTILAVFVTLYTSMALNAKITIIFGFAFIQAAVQLLMFMHLTESKDGNLQTFKVLFAIIITLITVIGTYWVMQGGHSSHL.

3 helical membrane passes run 8 to 28, 36 to 56, and 68 to 88; these read TVGF…TLYT, ITII…MFMH, and FKVL…YWVM.

This sequence belongs to the cytochrome c oxidase bacterial subunit 4 family.

It is found in the cell membrane. It carries out the reaction 2 a quinol + O2 = 2 a quinone + 2 H2O. Catalyzes quinol oxidation with the concomitant reduction of oxygen to water. This Staphylococcus saprophyticus subsp. saprophyticus (strain ATCC 15305 / DSM 20229 / NCIMB 8711 / NCTC 7292 / S-41) protein is Probable quinol oxidase subunit 4 (qoxD).